The chain runs to 336 residues: Ferrochelatase (336 aa).

Fe cation contacts are provided by His206 and Glu287.

This sequence belongs to the ferrochelatase family.

The protein resides in the cytoplasm. It catalyses the reaction heme b + 2 H(+) = protoporphyrin IX + Fe(2+). The protein operates within porphyrin-containing compound metabolism; protoheme biosynthesis; protoheme from protoporphyrin-IX: step 1/1. In terms of biological role, catalyzes the ferrous insertion into protoporphyrin IX. This is Ferrochelatase from Neisseria gonorrhoeae (strain ATCC 700825 / FA 1090).